The chain runs to 356 residues: Leucoanthocyanidin dioxygenase (356 aa).

Residues Tyr-142 and Lys-213 each coordinate substrate. The 100-residue stretch at 208–307 (LLLQMKINYY…RISWAVFCEP (100 aa)) folds into the Fe2OG dioxygenase domain. 2-oxoglutarate is bound at residue 215–217 (NYY). A Fe cation-binding site is contributed by His-232. Thr-233 contacts substrate. Asp-234 and His-288 together coordinate Fe cation. Position 298-300 (298-300 (RIS)) interacts with 2-oxoglutarate. Substrate is bound by residues Glu-306 and Lys-341.

Belongs to the iron/ascorbate-dependent oxidoreductase family. L-ascorbate is required as a cofactor. It depends on Fe(2+) as a cofactor. As to expression, expressed in young seedlings (at protein level).

It carries out the reaction a (2R,3S,4S)-leucoanthocyanidin + 2-oxoglutarate + O2 = a 4-H-anthocyanidin with a 3-hydroxy group + succinate + CO2 + 2 H2O. The enzyme catalyses (2R,3S,4S)-3,4-leucopelargonidin + 2-oxoglutarate + O2 = (4S)-2,3-dehydroleucopelargonidin + succinate + CO2 + H2O + H(+). The catalysed reaction is (2R,3S,4S)-leucocyanidin + 2-oxoglutarate + O2 = (4S)-2,3-dehydroleucocyanidin + succinate + CO2 + H2O + H(+). It participates in pigment biosynthesis; anthocyanin biosynthesis. Involved in anthocyanin and protoanthocyanidin biosynthesis by catalyzing the oxidation of leucoanthocyanidins into anthocyanidins. Possesses low flavonol synthase activity in vitro towards dihydrokaempferol and dihydroquercetin producing kaempferol and quercitin, respectively. The sequence is that of Leucoanthocyanidin dioxygenase (LDOX) from Arabidopsis thaliana (Mouse-ear cress).